Reading from the N-terminus, the 103-residue chain is Co-chaperonin GroES (103 aa).

Belongs to the GroES chaperonin family. Heptamer of 7 subunits arranged in a ring. Interacts with the chaperonin GroEL.

The protein resides in the cytoplasm. Its function is as follows. Together with the chaperonin GroEL, plays an essential role in assisting protein folding. The GroEL-GroES system forms a nano-cage that allows encapsulation of the non-native substrate proteins and provides a physical environment optimized to promote and accelerate protein folding. GroES binds to the apical surface of the GroEL ring, thereby capping the opening of the GroEL channel. The protein is Co-chaperonin GroES of Synechococcus sp. (strain WH7803).